The sequence spans 227 residues: 2-C-methyl-D-erythritol 4-phosphate cytidylyltransferase (227 aa).

This sequence belongs to the IspD/TarI cytidylyltransferase family. IspD subfamily.

The enzyme catalyses 2-C-methyl-D-erythritol 4-phosphate + CTP + H(+) = 4-CDP-2-C-methyl-D-erythritol + diphosphate. It functions in the pathway isoprenoid biosynthesis; isopentenyl diphosphate biosynthesis via DXP pathway; isopentenyl diphosphate from 1-deoxy-D-xylulose 5-phosphate: step 2/6. Functionally, catalyzes the formation of 4-diphosphocytidyl-2-C-methyl-D-erythritol from CTP and 2-C-methyl-D-erythritol 4-phosphate (MEP). This is 2-C-methyl-D-erythritol 4-phosphate cytidylyltransferase from Mycobacterium marinum (strain ATCC BAA-535 / M).